Reading from the N-terminus, the 373-residue chain is DNA primase small subunit PriS (373 aa).

Active-site residues include aspartate 95, aspartate 97, and aspartate 281.

Belongs to the eukaryotic-type primase small subunit family. Heterodimer of a small subunit (PriS) and a large subunit (PriL). The cofactor is Mg(2+). Mn(2+) is required as a cofactor.

In terms of biological role, catalytic subunit of DNA primase, an RNA polymerase that catalyzes the synthesis of short RNA molecules used as primers for DNA polymerase during DNA replication. The small subunit contains the primase catalytic core and has DNA synthesis activity on its own. Binding to the large subunit stabilizes and modulates the activity, increasing the rate of DNA synthesis while decreasing the length of the DNA fragments, and conferring RNA synthesis capability. The DNA polymerase activity may enable DNA primase to also catalyze primer extension after primer synthesis. May also play a role in DNA repair. The protein is DNA primase small subunit PriS of Nitrosopumilus maritimus (strain SCM1).